Reading from the N-terminus, the 313-residue chain is Methionyl-tRNA formyltransferase (313 aa).

112-115 serves as a coordination point for (6S)-5,6,7,8-tetrahydrofolate; the sequence is SLLP.

This sequence belongs to the Fmt family.

The enzyme catalyses L-methionyl-tRNA(fMet) + (6R)-10-formyltetrahydrofolate = N-formyl-L-methionyl-tRNA(fMet) + (6S)-5,6,7,8-tetrahydrofolate + H(+). Functionally, attaches a formyl group to the free amino group of methionyl-tRNA(fMet). The formyl group appears to play a dual role in the initiator identity of N-formylmethionyl-tRNA by promoting its recognition by IF2 and preventing the misappropriation of this tRNA by the elongation apparatus. The chain is Methionyl-tRNA formyltransferase from Geotalea uraniireducens (strain Rf4) (Geobacter uraniireducens).